The primary structure comprises 445 residues: Pre-B-cell leukemia transcription factor 2 (445 aa).

The disordered stretch occupies residues 13 to 44 (VGIPGLPIHGGPQTLTPHPMHEPPTDNGEPRK). Residues 31–44 (PMHEPPTDNGEPRK) are compositionally biased toward basic and acidic residues. Positions 42 to 236 (PRKQDIGDIL…VMILRSRFLD (195 aa)) constitute a PBC domain. A PBC-A region spans residues 49–128 (DILQQIMTIT…EGVAGPEKGG (80 aa)). The PBC-B stretch occupies residues 131–236 (AAAAAAAAAS…VMILRSRFLD (106 aa)). The homeobox; TALE-type DNA-binding region spans 237 to 299 (ARRKRRNFSK…NKRIRYKKNI (63 aa)). The span at 319–332 (QGGHSGANSPTTPT) shows a compositional bias: polar residues. The tract at residues 319 to 338 (QGGHSGANSPTTPTSAGSGG) is disordered.

This sequence belongs to the TALE/PBX homeobox family.

The protein localises to the nucleus. Transcriptional activator that binds the sequence 5'-ATCAATCAA-3'. The polypeptide is Pre-B-cell leukemia transcription factor 2 (pbx2) (Xenopus laevis (African clawed frog)).